The primary structure comprises 426 residues: Serine--tRNA ligase (426 aa).

Thr230–Glu232 serves as a coordination point for L-serine. Arg261 to Glu263 provides a ligand contact to ATP. Glu284 lines the L-serine pocket. An ATP-binding site is contributed by Glu348 to Ser351. L-serine is bound at residue Ser384.

Belongs to the class-II aminoacyl-tRNA synthetase family. Type-1 seryl-tRNA synthetase subfamily. Homodimer. The tRNA molecule binds across the dimer.

It localises to the cytoplasm. The catalysed reaction is tRNA(Ser) + L-serine + ATP = L-seryl-tRNA(Ser) + AMP + diphosphate + H(+). It catalyses the reaction tRNA(Sec) + L-serine + ATP = L-seryl-tRNA(Sec) + AMP + diphosphate + H(+). It functions in the pathway aminoacyl-tRNA biosynthesis; selenocysteinyl-tRNA(Sec) biosynthesis; L-seryl-tRNA(Sec) from L-serine and tRNA(Sec): step 1/1. In terms of biological role, catalyzes the attachment of serine to tRNA(Ser). Is also able to aminoacylate tRNA(Sec) with serine, to form the misacylated tRNA L-seryl-tRNA(Sec), which will be further converted into selenocysteinyl-tRNA(Sec). The chain is Serine--tRNA ligase from Erythrobacter litoralis (strain HTCC2594).